A 263-amino-acid polypeptide reads, in one-letter code: Trans-aconitate 2-methyltransferase (263 aa).

It belongs to the methyltransferase superfamily. Tam family.

The protein resides in the cytoplasm. The enzyme catalyses trans-aconitate + S-adenosyl-L-methionine = (E)-3-(methoxycarbonyl)pent-2-enedioate + S-adenosyl-L-homocysteine. Functionally, catalyzes the S-adenosylmethionine monomethyl esterification of trans-aconitate. This is Trans-aconitate 2-methyltransferase from Mycobacterium marinum (strain ATCC BAA-535 / M).